We begin with the raw amino-acid sequence, 397 residues long: NADH-quinone oxidoreductase subunit H 1 (397 aa).

The next 10 membrane-spanning stretches (helical) occupy residues 7–27 (FIFI…TTLA), 84–104 (PFLA…GPVI), 120–140 (IGVL…ALAG), 156–176 (SAQM…PLLI), 198–218 (LLSG…AAFA), 258–278 (MITV…APWP), 279–299 (AAYG…LVLL), 313–333 (TFPA…LPMV), 337–357 (LLPL…FMWI), and 376–396 (FLFP…AWTT).

This sequence belongs to the complex I subunit 1 family. As to quaternary structure, NDH-1 is composed of 14 different subunits. Subunits NuoA, H, J, K, L, M, N constitute the membrane sector of the complex.

The protein resides in the cell inner membrane. It catalyses the reaction a quinone + NADH + 5 H(+)(in) = a quinol + NAD(+) + 4 H(+)(out). NDH-1 shuttles electrons from NADH, via FMN and iron-sulfur (Fe-S) centers, to quinones in the respiratory chain. The immediate electron acceptor for the enzyme in this species is believed to be ubiquinone. Couples the redox reaction to proton translocation (for every two electrons transferred, four hydrogen ions are translocated across the cytoplasmic membrane), and thus conserves the redox energy in a proton gradient. This subunit may bind ubiquinone. In Solibacter usitatus (strain Ellin6076), this protein is NADH-quinone oxidoreductase subunit H 1.